The primary structure comprises 64 residues: Bowman-Birk type trypsin inhibitor TI1 (64 aa).

5 cysteine pairs are disulfide-bonded: Cys-9–Cys-61, Cys-10–Cys-25, Cys-15–Cys-23, Cys-32–Cys-39, and Cys-36–Cys-49.

It belongs to the Bowman-Birk serine protease inhibitor family.

This is Bowman-Birk type trypsin inhibitor TI1 from Coix lacryma-jobi (Job's tears).